A 154-amino-acid chain; its full sequence is Endoribonuclease YbeY (154 aa).

Residues H113, H117, and H123 each coordinate Zn(2+).

It belongs to the endoribonuclease YbeY family. It depends on Zn(2+) as a cofactor.

The protein localises to the cytoplasm. Functionally, single strand-specific metallo-endoribonuclease involved in late-stage 70S ribosome quality control and in maturation of the 3' terminus of the 16S rRNA. This chain is Endoribonuclease YbeY, found in Ehrlichia canis (strain Jake).